The primary structure comprises 303 residues: Protein REVEILLE 5 (303 aa).

Residues 54–108 (TIKKSRENWTDQEHDKFLEALHLFDRDWKKIEAFVGSKTVVQIRSHAQKYFLKVQ) enclose the HTH myb-type domain. The H-T-H motif DNA-binding region spans 81 to 104 (WKKIEAFVGSKTVVQIRSHAQKYF). The tract at residues 109–130 (KSGANEHLPPPRPKRKASHPYP) is disordered.

It is found in the nucleus. Functionally, probable transcription factor. The polypeptide is Protein REVEILLE 5 (RVE5) (Arabidopsis thaliana (Mouse-ear cress)).